A 255-amino-acid polypeptide reads, in one-letter code: MQIDVLSLFPNMFEPLRESMIGKAIERELLNFDVVDYRSYSHDKHHHVDDTPYGGGAGMLLKPEPLFEAMDGVNERHPGPKRVILMDPAGKKFNHQAARALSQEDHLVFICGHYEGYDERIRTLVTDEYSLGDYVLTGGELPAMVMIDAIVRLLPGVLGNDESAHTDSFENGLLEYPQYTRPPEYRGMKVPEVLQNGNHQLIARWRQKESLRRTYLRRPDLLKTITLDQTAQKLLREVKTEEATKAAEARLKNQS.

Residues Gly112 and 131–136 (LGDYVL) each bind S-adenosyl-L-methionine.

This sequence belongs to the RNA methyltransferase TrmD family. As to quaternary structure, homodimer.

Its subcellular location is the cytoplasm. It carries out the reaction guanosine(37) in tRNA + S-adenosyl-L-methionine = N(1)-methylguanosine(37) in tRNA + S-adenosyl-L-homocysteine + H(+). Its function is as follows. Specifically methylates guanosine-37 in various tRNAs. The polypeptide is tRNA (guanine-N(1)-)-methyltransferase (Lacticaseibacillus paracasei (strain ATCC 334 / BCRC 17002 / CCUG 31169 / CIP 107868 / KCTC 3260 / NRRL B-441) (Lactobacillus paracasei)).